Consider the following 859-residue polypeptide: Leucine--tRNA ligase (859 aa).

A 'HIGH' region motif is present at residues 42–52 (PYPSGKLHMGH). The short motif at 618–622 (KMSKS) is the 'KMSKS' region element. Lys-621 contributes to the ATP binding site.

The protein belongs to the class-I aminoacyl-tRNA synthetase family.

Its subcellular location is the cytoplasm. It carries out the reaction tRNA(Leu) + L-leucine + ATP = L-leucyl-tRNA(Leu) + AMP + diphosphate. The sequence is that of Leucine--tRNA ligase from Buchnera aphidicola subsp. Acyrthosiphon pisum (strain APS) (Acyrthosiphon pisum symbiotic bacterium).